A 93-amino-acid polypeptide reads, in one-letter code: Large ribosomal subunit protein uL23 (93 aa).

This sequence belongs to the universal ribosomal protein uL23 family. Part of the 50S ribosomal subunit. Contacts protein L29, and trigger factor when it is bound to the ribosome.

Its function is as follows. One of the early assembly proteins it binds 23S rRNA. One of the proteins that surrounds the polypeptide exit tunnel on the outside of the ribosome. Forms the main docking site for trigger factor binding to the ribosome. The protein is Large ribosomal subunit protein uL23 of Nitratiruptor sp. (strain SB155-2).